A 64-amino-acid chain; its full sequence is Large ribosomal subunit protein bL33 (64 aa).

Belongs to the bacterial ribosomal protein bL33 family.

In Picosynechococcus sp. (strain ATCC 27264 / PCC 7002 / PR-6) (Agmenellum quadruplicatum), this protein is Large ribosomal subunit protein bL33.